Reading from the N-terminus, the 334-residue chain is Fructose-1,6-bisphosphatase class 1 2 (334 aa).

Mg(2+) contacts are provided by Glu-92, Asp-114, Leu-116, and Asp-117. Residues 117-120 (DGSS), Asn-208, and Lys-274 each bind substrate. Glu-280 contributes to the Mg(2+) binding site.

Belongs to the FBPase class 1 family. Homotetramer. The cofactor is Mg(2+).

It is found in the cytoplasm. It catalyses the reaction beta-D-fructose 1,6-bisphosphate + H2O = beta-D-fructose 6-phosphate + phosphate. It functions in the pathway carbohydrate biosynthesis; gluconeogenesis. The protein is Fructose-1,6-bisphosphatase class 1 2 of Albidiferax ferrireducens (strain ATCC BAA-621 / DSM 15236 / T118) (Rhodoferax ferrireducens).